Here is a 209-residue protein sequence, read N- to C-terminus: Redox-sensing transcriptional repressor Rex (209 aa).

A DNA-binding region (H-T-H motif) is located at residues 16-55; sequence LYYRFIQNLSLSGKQRVSSAELSEAVKVDSATIRRDFSYF. An NAD(+)-binding site is contributed by 90–95; the sequence is GVGNLG.

It belongs to the transcriptional regulatory Rex family. Homodimer.

The protein localises to the cytoplasm. Its function is as follows. Modulates transcription in response to changes in cellular NADH/NAD(+) redox state. The polypeptide is Redox-sensing transcriptional repressor Rex (Bacillus mycoides (strain KBAB4) (Bacillus weihenstephanensis)).